The sequence spans 280 residues: Acetylglutamate kinase (280 aa).

Substrate is bound by residues 57-58, Arg-79, and Asn-174; that span reads GG.

It belongs to the acetylglutamate kinase family. ArgB subfamily.

It localises to the cytoplasm. It catalyses the reaction N-acetyl-L-glutamate + ATP = N-acetyl-L-glutamyl 5-phosphate + ADP. It participates in amino-acid biosynthesis; L-arginine biosynthesis; N(2)-acetyl-L-ornithine from L-glutamate: step 2/4. Catalyzes the ATP-dependent phosphorylation of N-acetyl-L-glutamate. This is Acetylglutamate kinase from Helicobacter hepaticus (strain ATCC 51449 / 3B1).